A 152-amino-acid chain; its full sequence is Actin-depolymerizing factor 2, isoform c (152 aa).

The region spanning 4-147 (GVKVDPSCKN…DEKSVKSDLM (144 aa)) is the ADF-H domain.

Belongs to the actin-binding proteins ADF family.

Depolymerizes growing actin filaments in muscle cells; required for the assembly of actin filaments into the functional contractile myofilament lattice of muscle. The protein is Actin-depolymerizing factor 2, isoform c of Caenorhabditis elegans.